Here is a 119-residue protein sequence, read N- to C-terminus: Beta-2-microglobulin (119 aa).

The first 20 residues, 1–20, serve as a signal peptide directing secretion; sequence MARFVVVALLVQLSLFGLEA. One can recognise an Ig-like C1-type domain in the interval 25-114; that stretch reads PKIQVYSRYP…VTFSTPKTVK (90 aa). A disulfide bond links Cys45 and Cys100.

The protein belongs to the beta-2-microglobulin family. In terms of assembly, heterodimer of an alpha chain and a beta chain. Beta-2-microglobulin is the beta-chain of major histocompatibility complex class I molecules.

It is found in the secreted. Its function is as follows. Component of the class I major histocompatibility complex (MHC). Involved in the presentation of peptide antigens to the immune system. The sequence is that of Beta-2-microglobulin (B2M) from Saguinus imperator (Emperor tamarin).